The sequence spans 450 residues: Ribosomal protein uS12 methylthiotransferase RimO (450 aa).

An MTTase N-terminal domain is found at 9–124; that stretch reads NRINVVTLGC…LLSALEADYK (116 aa). Residues Cys18, Cys53, Cys87, Cys148, Cys152, and Cys155 each coordinate [4Fe-4S] cluster. In terms of domain architecture, Radical SAM core spans 134-365; the sequence is TTPKNYAYLK…EIQSQISWEL (232 aa). In terms of domain architecture, TRAM spans 367–434; the sequence is QQKIGEVFNV…DFDLYGEPLN (68 aa).

Belongs to the methylthiotransferase family. RimO subfamily. Requires [4Fe-4S] cluster as cofactor.

It is found in the cytoplasm. The catalysed reaction is L-aspartate(89)-[ribosomal protein uS12]-hydrogen + (sulfur carrier)-SH + AH2 + 2 S-adenosyl-L-methionine = 3-methylsulfanyl-L-aspartate(89)-[ribosomal protein uS12]-hydrogen + (sulfur carrier)-H + 5'-deoxyadenosine + L-methionine + A + S-adenosyl-L-homocysteine + 2 H(+). Functionally, catalyzes the methylthiolation of an aspartic acid residue of ribosomal protein uS12. This chain is Ribosomal protein uS12 methylthiotransferase RimO, found in Christiangramia forsetii (strain DSM 17595 / CGMCC 1.15422 / KT0803) (Gramella forsetii).